The sequence spans 340 residues: Armadillo repeat-containing protein 12 (340 aa).

The tract at residues 1–101 is interaction with TBC1D15; the sequence is MGKSIPQYLG…SITRCVYLLE (101 aa). ARM repeat units lie at residues 100-139, 179-218, and 278-318; these read LEAEASACTTDDIVLLGYMLDDKDNSVKTQALNTLKAFSG, LPDYVHPQLRRVMPALMEILQSDYILAQVQAVRLLSYLAQ, and SLHE…SLQY.

In terms of assembly, interacts with TBC1D15, TBC1D21, GK2 and IMMT. Interacts with VDAC2 and VDAC3 in a TBC1D21-dependent manner. Interacts (via ARM domains) with RBBP4. As to expression, expressed in testis. Highly expressed in the mid-piece of the elongated and late spermatids. Expressed at higher levels in neuroblastoma tissues and cell lines, than those of normal dorsal ganglia (at protein level). Expressed in breast cancer, colon cancer, hepatocellular carcinoma, lung cancer, pancreas cancer, prostate cancer, renal cancer and gastric cancer, but not in their normal counterparts.

The protein localises to the nucleus. The protein resides in the mitochondrion outer membrane. Functionally, essential for male fertility and sperm mitochondrial sheath formation. Required for proper mitochondrial elongation and coiling along the flagellum during the formation of the mitochondrial sheath. Facilitates the growth and aggressiveness of neuroblastoma cells. Increases the EZH2 activity and H3K27me3 levels in a RBBP4-dependent manner, and facilitates the enrichment of polycomb repressive complex 2 and H3K27me3 on gene promoters, resulting in transcriptional repression of tumor suppressors affecting the proliferation, invasion, and metastasis of tumor cells. This chain is Armadillo repeat-containing protein 12 (ARMC12), found in Homo sapiens (Human).